A 186-amino-acid chain; its full sequence is Thiol:disulfide interchange protein CycY (186 aa).

The N-terminal stretch at 1–20 (MGRYTLALLPLIVFGGIAHG) is a signal peptide. One can recognise a Thioredoxin domain in the interval 47-182 (DAEPAAARRA…LVPAMEKALG (136 aa)). Residues Cys80 and Cys83 are joined by a disulfide bond.

The protein belongs to the thioredoxin family. DsbE subfamily.

It is found in the periplasm. In terms of biological role, required for disulfide bond formation in some periplasmic proteins. Also acts as a disulfide oxidoreductase in cytochromes c biogenesis. The cysteines of apocytochromes c must be in the reduced state for covalent linkage between the two moieties to occur. The chain is Thiol:disulfide interchange protein CycY (cycY) from Rhizobium leguminosarum bv. viciae.